We begin with the raw amino-acid sequence, 109 residues long: Large ribosomal subunit protein uL1 (109 aa).

It belongs to the universal ribosomal protein uL1 family. In terms of assembly, part of the 50S ribosomal subunit.

Binds directly to 23S rRNA. The L1 stalk is quite mobile in the ribosome, and is involved in E site tRNA release. Functionally, protein L1 is also a translational repressor protein, it controls the translation of the L11 operon by binding to its mRNA. This is Large ribosomal subunit protein uL1 (rplA) from Aquifex pyrophilus.